The following is a 374-amino-acid chain: DNA replication and repair protein RecF (374 aa).

30-37 (GENAQGKT) is an ATP binding site.

The protein belongs to the RecF family.

Its subcellular location is the cytoplasm. Functionally, the RecF protein is involved in DNA metabolism; it is required for DNA replication and normal SOS inducibility. RecF binds preferentially to single-stranded, linear DNA. It also seems to bind ATP. The polypeptide is DNA replication and repair protein RecF (Geobacillus sp. (strain WCH70)).